A 778-amino-acid chain; its full sequence is uncharacterized protein (778 aa).

The PE domain maps to 1–92 (MSFVIAVPEA…GARSYVVAEA (92 aa)). Disordered stretches follow at residues 125–163 (ADGTGAPGGPGGLLLGNGGNGGSGAPGQPGGAGGDAGLI), 372–510 (TGLA…GDAF), and 718–778 (QGGL…GADG). Gly residues-rich tracts occupy residues 402-429 (NQTGGNGGPGPAGGVGEAGGVGGQGGLG), 436-510 (DGTG…GDAF), and 718-763 (QGGL…GSSG).

This sequence belongs to the mycobacterial PE family. PGRS subfamily.

This is an uncharacterized protein from Mycobacterium bovis (strain ATCC BAA-935 / AF2122/97).